The primary structure comprises 54 residues: MRGLEAPGAVGPTGPSGAPGSQGPDGDVGGMGPEGPKGDDGPVGPKGPQGAAIF.

The disordered stretch occupies residues 1 to 54; sequence MRGLEAPGAVGPTGPSGAPGSQGPDGDVGGMGPEGPKGDDGPVGPKGPQGAAIF. In terms of domain architecture, Collagen-like spans 7 to 51; it reads PGAVGPTGPSGAPGSQGPDGDVGGMGPEGPKGDDGPVGPKGPQGA. The span at 26-35 shows a compositional bias: gly residues; sequence GDVGGMGPEG. Over residues 42–54 the composition is skewed to low complexity; that stretch reads PVGPKGPQGAAIF.

In Dryophytes versicolor (chameleon treefrog), this protein is Putative collagen-like domain-containing protein 065L.